Reading from the N-terminus, the 123-residue chain is Ribosome-binding factor A (123 aa).

Belongs to the RbfA family. In terms of assembly, monomer. Binds 30S ribosomal subunits, but not 50S ribosomal subunits or 70S ribosomes.

It is found in the cytoplasm. In terms of biological role, one of several proteins that assist in the late maturation steps of the functional core of the 30S ribosomal subunit. Associates with free 30S ribosomal subunits (but not with 30S subunits that are part of 70S ribosomes or polysomes). Required for efficient processing of 16S rRNA. May interact with the 5'-terminal helix region of 16S rRNA. The chain is Ribosome-binding factor A from Variovorax paradoxus (strain S110).